The following is a 183-amino-acid chain: Non-specific lipid transfer protein GPI-anchored 15 (183 aa).

Positions 1–24 are cleaved as a signal peptide; that stretch reads MGYRRSYAITFVALVAALWSVTKA. Intrachain disulfides connect C30-C71, C40-C55, C56-C97, and C69-C107. N-linked (GlcNAc...) asparagine glycans are attached at residues N47 and N86. Residues 108–158 are disordered; that stretch reads NAATGPTAQPPAPSPTEKTPDVTLTPTSLPGARSGVGGGSKTVPSVGTGSS. Polar residues predominate over residues 149-158; the sequence is TVPSVGTGSS. Residue S158 is the site of GPI-anchor amidated serine attachment. The propeptide at 159-183 is removed in mature form; that stretch reads SRNVDPLPLHFLMFAVLVVCTSSFL.

It belongs to the plant LTP family. In terms of tissue distribution, expressed in seedlings, preferentially in the endodermis of hypocotyls and roots. Also observed in siliques.

The protein localises to the cell membrane. Probable lipid transfer protein. This Arabidopsis thaliana (Mouse-ear cress) protein is Non-specific lipid transfer protein GPI-anchored 15.